A 390-amino-acid chain; its full sequence is MAMSILAKIFLVFAIYCAIDPFSHSSISKFPDFKTYKIDMPPLSSLPKERDRQNLLQNSEIRFLNEVQGPESIAFDPQGRGPYTGVADGRILFWNGTRWTDFAYTSNNRSELCDPKPSLLDYLKDEDICGRPLGLRFDKKNGDLYIADAYLGIMKVGPEGGLATSVTNEADGVPLRFTNDLDIDDEGNVYFTDSSSFFQRRKFMLLIVSGEDSGRVLKYNPKTKETTTLVRNLQFPNGLSLGKDGSFFIFCEGSIGRLRKYWLKGEKAGTSEVVALLHGFPDNIRTNKDGDFWVAVHCHRNIFTHLMAHYPRVRKFFLKLPISVKFQYLLQVGGWPHAVAVKYSEEGKVLKVLEDSKGKVVKAVSEVEEKDGKLWMGSVLMSFIAVYDLP.

The first 25 residues, 1 to 25 (MAMSILAKIFLVFAIYCAIDPFSHS), serve as a signal peptide directing secretion. 2 N-linked (GlcNAc...) asparagine glycosylation sites follow: Asn-95 and Asn-108.

Belongs to the strictosidine synthase family.

Its subcellular location is the vacuole. The chain is Protein STRICTOSIDINE SYNTHASE-LIKE 3 from Arabidopsis thaliana (Mouse-ear cress).